Here is a 200-residue protein sequence, read N- to C-terminus: Potassium-transporting ATPase KdpC subunit (200 aa).

The helical transmembrane segment at 13–33 (ITLIFWLITAIIYPLAILVVG) threads the bilayer.

This sequence belongs to the KdpC family. As to quaternary structure, the system is composed of three essential subunits: KdpA, KdpB and KdpC.

Its subcellular location is the cell membrane. Its function is as follows. Part of the high-affinity ATP-driven potassium transport (or Kdp) system, which catalyzes the hydrolysis of ATP coupled with the electrogenic transport of potassium into the cytoplasm. This subunit acts as a catalytic chaperone that increases the ATP-binding affinity of the ATP-hydrolyzing subunit KdpB by the formation of a transient KdpB/KdpC/ATP ternary complex. This chain is Potassium-transporting ATPase KdpC subunit, found in Anabaena sp. (strain L31).